Here is a 185-residue protein sequence, read N- to C-terminus: Ribosome-recycling factor (185 aa).

It belongs to the RRF family.

The protein localises to the cytoplasm. In terms of biological role, responsible for the release of ribosomes from messenger RNA at the termination of protein biosynthesis. May increase the efficiency of translation by recycling ribosomes from one round of translation to another. The sequence is that of Ribosome-recycling factor from Roseiflexus castenholzii (strain DSM 13941 / HLO8).